Reading from the N-terminus, the 534-residue chain is Probable alkaline/neutral invertase D (534 aa).

Phosphoserine is present on residues serine 7 and serine 37. Threonine 55 carries the post-translational modification Phosphothreonine. A Phosphoserine modification is found at serine 532.

It belongs to the glycosyl hydrolase 100 family.

The catalysed reaction is Hydrolysis of terminal non-reducing beta-D-fructofuranoside residues in beta-D-fructofuranosides.. Its function is as follows. Invertase that cleaves sucrose into glucose and fructose. In Arabidopsis thaliana (Mouse-ear cress), this protein is Probable alkaline/neutral invertase D.